The following is an 87-amino-acid chain: Large ribosomal subunit protein bL31B (87 aa).

Belongs to the bacterial ribosomal protein bL31 family. Type B subfamily. In terms of assembly, part of the 50S ribosomal subunit.

This chain is Large ribosomal subunit protein bL31B, found in Burkholderia pseudomallei (strain 1106a).